A 165-amino-acid chain; its full sequence is MVDVHAQRKQIEKLISLNRVTKVVKGGRRFSFAAFMVVGDGEGHVGWGFGKANDASDAIKKSLTSARKNLRFVPIRKGTLPHEVIGCFKKAKVLIKPATHGTGVIAGGPVRAVMEALGVHDILSKSLGSNNSMNVVKATFKAFDLVLNAEKVAEMRGKTLKTLWG.

One can recognise an S5 DRBM domain in the interval 10-73; that stretch reads QIEKLISLNR…TSARKNLRFV (64 aa).

It belongs to the universal ribosomal protein uS5 family. Part of the 30S ribosomal subunit. Contacts proteins S4 and S8.

Its function is as follows. With S4 and S12 plays an important role in translational accuracy. Located at the back of the 30S subunit body where it stabilizes the conformation of the head with respect to the body. The sequence is that of Small ribosomal subunit protein uS5 from Borreliella burgdorferi (strain ATCC 35210 / DSM 4680 / CIP 102532 / B31) (Borrelia burgdorferi).